The chain runs to 515 residues: MNPDLDTGHNTSAPAQWGELKDANFTGPNQTSSNSTLPQLDVTRAISVGLVLGAFILFAIVGNILVILSVACNRHLRTPTNYFIVNLAIADLLLSFTVLPFSATLEVLGYWVLGRIFCDIWAAVDVLCCTASILSLCAISIDRYIGVRYSLQYPTLVTRRKAILALLSVWVLSTVISIGPLLGWKEPAPNDDKECGVTEEPFYALFSSLGSFYIPLAVILVMYCRVYIVAKRTTKNLEAGVMKEMSNSKELTLRIHSKNFHEDTLSSTKAKGHNPRSSIAVKLFKFSREKKAAKTLGIVVGMFILCWLPFFIALPLGSLFSTLKPPDAVFKVVFWLGYFNSCLNPIIYPCSSKEFKRAFMRILGCQCRSGRRRRRRRRLGACAYTYRPWTRGGSLERSQSRKDSLDDSGSCMSGSQRTLPSASPSPGYLGRGAQPPLELCAYPEWKSGALLSLPEPPGRRGRLDSGPLFTFKLLGEPESPGTEGDASNGGCDATTDLANGQPGFKSNMPLAPGHF.

At 1-45 (MNPDLDTGHNTSAPAQWGELKDANFTGPNQTSSNSTLPQLDVTRA) the chain is on the extracellular side. N-linked (GlcNAc...) asparagine glycans are attached at residues N10, N24, and N34. The chain crosses the membrane as a helical span at residues 46 to 70 (ISVGLVLGAFILFAIVGNILVILSV). Over 71–83 (ACNRHLRTPTNYF) the chain is Cytoplasmic. A helical membrane pass occupies residues 84-105 (IVNLAIADLLLSFTVLPFSATL). At 106-115 (EVLGYWVLGR) the chain is on the extracellular side. The chain crosses the membrane as a helical span at residues 116–141 (IFCDIWAAVDVLCCTASILSLCAISI). Residues C118 and C195 are joined by a disulfide bond. Topologically, residues 142–161 (DRYIGVRYSLQYPTLVTRRK) are cytoplasmic. The chain crosses the membrane as a helical span at residues 162-184 (AILALLSVWVLSTVISIGPLLGW). The Extracellular portion of the chain corresponds to 185 to 201 (KEPAPNDDKECGVTEEP). A helical transmembrane segment spans residues 202-224 (FYALFSSLGSFYIPLAVILVMYC). Over 225-295 (RVYIVAKRTT…FSREKKAAKT (71 aa)) the chain is Cytoplasmic. T264 is modified (phosphothreonine). Residues 296–319 (LGIVVGMFILCWLPFFIALPLGSL) traverse the membrane as a helical segment. Residues 320–326 (FSTLKPP) lie on the Extracellular side of the membrane. A helical transmembrane segment spans residues 327 to 351 (DAVFKVVFWLGYFNSCLNPIIYPCS). Residues 352-515 (SKEFKRAFMR…SNMPLAPGHF (164 aa)) are Cytoplasmic-facing. C365 carries the S-palmitoyl cysteine lipid modification. The short motif at 368-378 (RSGRRRRRRRR) is the Nuclear localization signal element. Disordered regions lie at residues 392-428 (GGSLERSQSRKDSLDDSGSCMSGSQRTLPSASPSPGY) and 473-515 (LLGE…PGHF). Residues 410 to 424 (SCMSGSQRTLPSASP) show a composition bias toward polar residues.

Belongs to the G-protein coupled receptor 1 family. Adrenergic receptor subfamily. ADRA1B sub-subfamily. As to quaternary structure, homo- and heterooligomer. Heterooligomerizes with ADRA1B homooligomers in cardiac myocytes. Interacts with CAVIN4.

Its subcellular location is the nucleus membrane. It is found in the cell membrane. The protein resides in the cytoplasm. It localises to the membrane. The protein localises to the caveola. In terms of biological role, this alpha-adrenergic receptor mediates its action by association with G proteins that activate a phosphatidylinositol-calcium second messenger system. Its effect is mediated by G(q) and G(11) proteins. Nuclear ADRA1A-ADRA1B heterooligomers regulate phenylephrine (PE)-stimulated ERK signaling in cardiac myocytes. The protein is Alpha-1B adrenergic receptor (ADRA1B) of Mesocricetus auratus (Golden hamster).